A 203-amino-acid polypeptide reads, in one-letter code: Ras-related protein Rab5A (203 aa).

18–26 (GDVGTGKSS) contributes to the GTP binding site. Residues 40 to 48 (QESTIGAAF) carry the Effector region motif. GTP is bound by residues 66-70 (DTAGQ), 124-127 (NKAD), and 154-155 (SA). 2 S-geranylgeranyl cysteine lipidation sites follow: cysteine 201 and cysteine 202.

It belongs to the small GTPase superfamily. Rab family. In terms of assembly, interacts with VPS9A. Interacts with NSF and RBP-L. In terms of tissue distribution, highly expressed in roots. Expressed at low levels in shoots, flowers and grains.

The protein localises to the prevacuolar compartment membrane. It localises to the golgi apparatus membrane. Its subcellular location is the cell membrane. It is found in the protein storage vacuole membrane. Plays an important role in intracellular trafficking of seed storage proteins to the protein storage vacuoles (PSVs). Participates in the transport of the proglutelins from the Golgi apparatus to the PSVs in endosperm. Functions cooperatively with VPS9A to regulate post-Golgi dense vesicle-mediated transport of storage proteins to the type II protein bodies (PBII) protein storage vacuoles in developing endosperm. Involved in the maintenance of the general structural organization of the endomembrane system in developing endosperm. Binds GTP in vitro. Forms a quaternary complex with the two glutelin zipcode RNA-binding proteins RBP-L and RBP-P, and the membrane trafficking factor NSF. This quaternay complex carries glutelin mRNAs for active transport on endosomes to the cortical endoplasmic reticulum membrane, and enables endosome-mediated glutelin mRNA transport in endosperm cells. The chain is Ras-related protein Rab5A from Oryza sativa subsp. japonica (Rice).